The following is an 832-amino-acid chain: SID1 transmembrane family member 2 (832 aa).

The first 18 residues, 1-18, serve as a signal peptide directing secretion; sequence MIAWRLPLCVLLVASVES. The Extracellular portion of the chain corresponds to 19 to 293; the sequence is HLGALGPKNV…VSQAVTSEAY (275 aa). N-linked (GlcNAc...) asparagine glycans are attached at residues asparagine 27, asparagine 54, asparagine 60, asparagine 123, asparagine 141, and asparagine 165. Residues 294-314 form a helical membrane-spanning segment; that stretch reads VGGMLFCLGIFLSFYLLTVLL. Residues 315 to 447 lie on the Cytoplasmic side of the membrane; that stretch reads ACWENWRQRK…DKRVLRKKYQ (133 aa). Serine 401, serine 403, and serine 404 each carry phosphoserine. A helical membrane pass occupies residues 448-468; that stretch reads IYFWNIATIAVFYALPVVQLV. At 469-499 the chain is on the extracellular side; the sequence is ITYQTVVNVTGNQDICYYNFLCAHPLGNLSA. N-linked (GlcNAc...) asparagine glycans are attached at residues asparagine 476 and asparagine 496. The chain crosses the membrane as a helical span at residues 500–520; sequence FNNILSNLGYILLGLLFLLII. Residues 521 to 546 are Cytoplasmic-facing; sequence LQREINHNRALLRNDLYALECGIPKH. A helical transmembrane segment spans residues 547 to 567; it reads FGLFYAMGTALMMEGLLSACY. Over 568 to 605 the chain is Extracellular; it reads HVCPNYTNFQFDTSFMYMIAGLCMLKLYQKRHPDINAS. N-linked (GlcNAc...) asparagine glycosylation is found at asparagine 572 and asparagine 603. The helical transmembrane segment at 606 to 626 threads the bilayer; sequence AYSAYACLAIVIFFSVLGVVF. The Cytoplasmic segment spans residues 627–631; it reads GKGNT. A helical transmembrane segment spans residues 632–652; the sequence is AFWIVFSVIHIISTLLLSTQL. The Extracellular segment spans residues 653-688; sequence YYMGRWKLDSGIFRRILHVLYTDCIRQCSGPLYTDR. The helical transmembrane segment at 689 to 709 threads the bilayer; it reads MVLLVMGNIINWSLAAYGLIM. The Cytoplasmic segment spans residues 710–715; that stretch reads RPNDFA. The helical transmembrane segment at 716-736 threads the bilayer; that stretch reads SYLLAIGICNLLLYFAFYIIM. Residues 737 to 746 lie on the Extracellular side of the membrane; sequence KLRSGERIKL. The helical transmembrane segment at 747–767 threads the bilayer; it reads IPLLCIVCTSVVWGFALFFFF. The Cytoplasmic portion of the chain corresponds to 768–796; the sequence is QGLSTWQKTPAESREHNRDCILLDFFDDH. Residues 797-817 form a helical membrane-spanning segment; the sequence is DIWHFLSSIAMFGSFLVLLTL. Residues 818–832 are Extracellular-facing; it reads DDDLDTVQRDKIYVF.

Belongs to the SID1 family. In terms of assembly, interacts with adapter protein complex 1 (AP-1) and AP-2, but not AP-3 and AP-4. Interacts with LAMP2. In terms of processing, glycosylated. Widely expressed, including in the liver, brain and kidney (at protein level).

It localises to the lysosome membrane. Its subcellular location is the cell membrane. Mediates the translocation of RNA and DNA across the lysosomal membrane during RNA and DNA autophagy (RDA), a process in which RNA and DNA is directly imported into lysosomes in an ATP-dependent manner, and degraded. Involved in the uptake of single-stranded oligonucleotides by living cells, a process called gymnosis. In vitro, mediates the uptake of linear DNA more efficiently than that of circular DNA, but exhibits similar uptake efficacy toward RNA and DNA. Binds long double-stranded RNA (dsRNA) (500 - 700 base pairs), but not dsRNA shorter than 100 bp. This Mus musculus (Mouse) protein is SID1 transmembrane family member 2 (Sidt2).